Here is a 346-residue protein sequence, read N- to C-terminus: Ribonucleoside-diphosphate reductase subunit beta (346 aa).

3 residues coordinate Fe cation: Glu89, Glu120, and His123. Tyr129 is a catalytic residue. Fe cation contacts are provided by Glu193, Glu227, and His230.

The protein belongs to the ribonucleoside diphosphate reductase small chain family. As to quaternary structure, tetramer of two alpha and two beta subunits. Requires Fe cation as cofactor.

The catalysed reaction is a 2'-deoxyribonucleoside 5'-diphosphate + [thioredoxin]-disulfide + H2O = a ribonucleoside 5'-diphosphate + [thioredoxin]-dithiol. Functionally, provides the precursors necessary for DNA synthesis. Catalyzes the biosynthesis of deoxyribonucleotides from the corresponding ribonucleotides. This Chlamydia pneumoniae (Chlamydophila pneumoniae) protein is Ribonucleoside-diphosphate reductase subunit beta (nrdB).